Consider the following 189-residue polypeptide: Crossover junction endodeoxyribonuclease RuvC (189 aa).

Residues D9, E70, and D143 contribute to the active site. Mg(2+)-binding residues include D9, E70, and D143. The segment covering 162-178 (MGAASGNSSLTPAQKAW) has biased composition (low complexity). The segment at 162–189 (MGAASGNSSLTPAQKAWADAEAKARRKR) is disordered. Residues 179–189 (ADAEAKARRKR) are compositionally biased toward basic and acidic residues.

This sequence belongs to the RuvC family. Homodimer which binds Holliday junction (HJ) DNA. The HJ becomes 2-fold symmetrical on binding to RuvC with unstacked arms; it has a different conformation from HJ DNA in complex with RuvA. In the full resolvosome a probable DNA-RuvA(4)-RuvB(12)-RuvC(2) complex forms which resolves the HJ. Requires Mg(2+) as cofactor.

Its subcellular location is the cytoplasm. The enzyme catalyses Endonucleolytic cleavage at a junction such as a reciprocal single-stranded crossover between two homologous DNA duplexes (Holliday junction).. Functionally, the RuvA-RuvB-RuvC complex processes Holliday junction (HJ) DNA during genetic recombination and DNA repair. Endonuclease that resolves HJ intermediates. Cleaves cruciform DNA by making single-stranded nicks across the HJ at symmetrical positions within the homologous arms, yielding a 5'-phosphate and a 3'-hydroxyl group; requires a central core of homology in the junction. The consensus cleavage sequence is 5'-(A/T)TT(C/G)-3'. Cleavage occurs on the 3'-side of the TT dinucleotide at the point of strand exchange. HJ branch migration catalyzed by RuvA-RuvB allows RuvC to scan DNA until it finds its consensus sequence, where it cleaves and resolves the cruciform DNA. The sequence is that of Crossover junction endodeoxyribonuclease RuvC from Paenarthrobacter aurescens (strain TC1).